A 514-amino-acid polypeptide reads, in one-letter code: Activin receptor type-2A (514 aa).

The N-terminal stretch at 1 to 20 (MGAATKLAFAVFLISCSSAG) is a signal peptide. The Extracellular segment spans residues 21–136 (SILGRSETKE…TSNPVTTKPP (116 aa)). 5 disulfides stabilise this stretch: C31-C61, C51-C79, C86-C105, C92-C104, and C106-C111. 3 N-linked (GlcNAc...) asparagine glycosylation sites follow: N46, N67, and N88. A helical transmembrane segment spans residues 137–162 (LFNTLLYSLVPIMVVAVIVLFSFWMY). Residues 163 to 514 (RHHKLAYPPV…VDFPPKESSL (352 aa)) lie on the Cytoplasmic side of the membrane. The Protein kinase domain occupies 193 to 486 (LQLLEVKARG…EERIIQMQKL (294 aa)). ATP is bound by residues 199–207 (KARGRFGCV) and K220. D323 serves as the catalytic Proton acceptor.

It belongs to the protein kinase superfamily. TKL Ser/Thr protein kinase family. TGFB receptor subfamily.

Its subcellular location is the cell membrane. The catalysed reaction is L-threonyl-[receptor-protein] + ATP = O-phospho-L-threonyl-[receptor-protein] + ADP + H(+). The enzyme catalyses L-seryl-[receptor-protein] + ATP = O-phospho-L-seryl-[receptor-protein] + ADP + H(+). Functionally, receptor for activin A, activin B and inhibin A. Involved in transmembrane signaling. This chain is Activin receptor type-2A (acvr2a), found in Xenopus laevis (African clawed frog).